The following is a 612-amino-acid chain: Dihydroxy-acid dehydratase (612 aa).

Asp-81 serves as a coordination point for Mg(2+). Residue Cys-122 coordinates [2Fe-2S] cluster. Mg(2+)-binding residues include Asp-123 and Lys-124. Lys-124 bears the N6-carboxylysine mark. Cys-195 serves as a coordination point for [2Fe-2S] cluster. Glu-491 provides a ligand contact to Mg(2+). The active-site Proton acceptor is Ser-517.

The protein belongs to the IlvD/Edd family. As to quaternary structure, homodimer. Requires [2Fe-2S] cluster as cofactor. The cofactor is Mg(2+).

The enzyme catalyses (2R)-2,3-dihydroxy-3-methylbutanoate = 3-methyl-2-oxobutanoate + H2O. It carries out the reaction (2R,3R)-2,3-dihydroxy-3-methylpentanoate = (S)-3-methyl-2-oxopentanoate + H2O. It functions in the pathway amino-acid biosynthesis; L-isoleucine biosynthesis; L-isoleucine from 2-oxobutanoate: step 3/4. Its pathway is amino-acid biosynthesis; L-valine biosynthesis; L-valine from pyruvate: step 3/4. In terms of biological role, functions in the biosynthesis of branched-chain amino acids. Catalyzes the dehydration of (2R,3R)-2,3-dihydroxy-3-methylpentanoate (2,3-dihydroxy-3-methylvalerate) into 2-oxo-3-methylpentanoate (2-oxo-3-methylvalerate) and of (2R)-2,3-dihydroxy-3-methylbutanoate (2,3-dihydroxyisovalerate) into 2-oxo-3-methylbutanoate (2-oxoisovalerate), the penultimate precursor to L-isoleucine and L-valine, respectively. The chain is Dihydroxy-acid dehydratase from Rhizobium leguminosarum bv. trifolii (strain WSM2304).